The primary structure comprises 232 residues: Exosome complex component RRP40 (232 aa).

This sequence belongs to the RRP40 family. Component of the RNA exosome complex. Specifically part of the catalytically inactive RNA exosome core complex.

Its subcellular location is the cytoplasm. It is found in the nucleus. The protein localises to the nucleolus. Its function is as follows. Non-catalytic component of the RNA exosome complex which has 3'-&gt;5' exoribonuclease activity and participates in a multitude of cellular RNA processing and degradation events. In the nucleus, the RNA exosome complex is involved in proper maturation of stable RNA species such as rRNA, snRNA and snoRNA, in the elimination of RNA processing by-products and non-coding 'pervasive' transcripts such as antisense RNA species, and of mRNAs with processing defects, thereby limiting or excluding their export to the cytoplasm. In the cytoplasm, the RNA exosome complex is involved in general mRNA turnover and specifically degrades inherently unstable mRNAs containing AU-rich elements (AREs) within their 3' untranslated regions, and in RNA surveillance pathways, preventing translation of aberrant mRNAs. The catalytic inactive RNA exosome core complex of 9 subunits is proposed to play a pivotal role in the binding and presentation of RNA for ribonucleolysis, and to serve as a scaffold for the association with catalytic subunits and accessory proteins or complexes. Required generally for normal embryonic and neuronal development. Also plays a critical role in the maintenance of neuronal function in mature flies by controlling the levels of specific mRNAs such as the synaptic regulator Arc1. The polypeptide is Exosome complex component RRP40 (Drosophila melanogaster (Fruit fly)).